The primary structure comprises 992 residues: Aminopeptidase Q (992 aa).

Topologically, residues 2-13 (GPPSSSGFYVSR) are cytoplasmic. Residues 14-34 (AVALLLAALAAALLLALAVLA) traverse the membrane as a helical; Signal-anchor for type II membrane protein segment. Topologically, residues 35 to 992 (ALYGRCARVQ…RMTAWLRKNT (958 aa)) are extracellular. Residues 47–92 (DLHHSGVPDAASSPRGTQEEPLPTWPPRPTREPAGTATPGHWRPPG) form a disordered region. N-linked (GlcNAc...) asparagine glycosylation occurs at N133. Residue E241 coordinates substrate. 4 N-linked (GlcNAc...) asparagine glycosylation sites follow: N262, N289, N347, and N361. 380–384 (SAMEN) contacts substrate. Residue H416 participates in Zn(2+) binding. Catalysis depends on E417, which acts as the Proton acceptor. Zn(2+) contacts are provided by H420 and E439. The active-site Proton donor is the Y505. N-linked (GlcNAc...) asparagine glycans are attached at residues N555, N584, N602, N609, N655, N811, N850, and N889.

Belongs to the peptidase M1 family. Requires Zn(2+) as cofactor. As to expression, expressed in skin. Expression levels do not differ between dark and light skin areas.

Its subcellular location is the membrane. Metalloprotease which may be important for placentation by regulating biological activity of key peptides at the embryo-maternal interface. Involved in coat pigmentation patterns. During skin development, may be required to establish the periodicity of tabby markings, initiating a pre-pattern at or before hair follicle development. This Felis catus (Cat) protein is Aminopeptidase Q (LVRN).